We begin with the raw amino-acid sequence, 338 residues long: Putative clathrin assembly protein At5g10410 (338 aa).

One can recognise an ENTH domain in the interval Phe27–Pro157.

It is found in the membrane. The protein localises to the clathrin-coated pit. Its subcellular location is the golgi apparatus. The protein resides in the cytoplasmic vesicle. It localises to the clathrin-coated vesicle. The sequence is that of Putative clathrin assembly protein At5g10410 from Arabidopsis thaliana (Mouse-ear cress).